The primary structure comprises 759 residues: DNA replication licensing factor mcm-5 (759 aa).

Residues 330 to 536 (AYELIAKSIA…KDATLAKHVI (207 aa)) form the MCM domain. Arginine 370 lines the ADP pocket. An Arginine finger motif is present at residues 511-514 (SRFD).

This sequence belongs to the MCM family. Component of the mcm2-7 complex. The complex forms a toroidal hexameric ring with the proposed subunit order mcm2-mcm6-mcm4-mcm7-mcm3-mcm5 (By simililarity).

It localises to the nucleus. It is found in the cytoplasm. The protein localises to the cytosol. The catalysed reaction is ATP + H2O = ADP + phosphate + H(+). Functionally, acts as a component of the MCM2-7 complex (MCM complex) which is the replicative helicase essential for 'once per cell cycle' DNA replication initiation and elongation in eukaryotic cells. Core component of CDC45-MCM-GINS (CMG) helicase, the molecular machine that unwinds template DNA during replication, and around which the replisome is built. The active ATPase sites in the MCM2-7 ring are formed through the interaction surfaces of two neighboring subunits such that a critical structure of a conserved arginine finger motif is provided in trans relative to the ATP-binding site of the Walker A box of the adjacent subunit. The six ATPase active sites, however, are likely to contribute differentially to the complex helicase activity. The sequence is that of DNA replication licensing factor mcm-5 (mcm-5) from Caenorhabditis elegans.